Reading from the N-terminus, the 898-residue chain is Nitrate reductase [NAD(P)H] (898 aa).

A compositionally biased stretch (basic and acidic residues) spans 1–15 (MAASVENRRFTHHEP). The disordered stretch occupies residues 1–65 (MAASVENRRF…SSSEDENEND (65 aa)). C180 is a binding site for Mo-molybdopterin. Residues 528–603 (SKMFSMSEVK…LEDYRIGELI (76 aa)) enclose the Cytochrome b5 heme-binding domain. Residues H563 and H586 each contribute to the heme site. The region spanning 642 to 754 (GAKIPTKLVY…KGPLGHVEYT (113 aa)) is the FAD-binding FR-type domain. FAD is bound by residues 694–697 (RAYT), 711–715 (VVKIY), F716, F723, 728–730 (LMS), and T781.

This sequence belongs to the nitrate reductase family. Homodimer. It depends on FAD as a cofactor. Heme serves as cofactor. Requires Mo-molybdopterin as cofactor.

The catalysed reaction is nitrite + NAD(+) + H2O = nitrate + NADH + H(+). It catalyses the reaction nitrite + NADP(+) + H2O = nitrate + NADPH + H(+). In terms of biological role, nitrate reductase is a key enzyme involved in the first step of nitrate assimilation in plants, fungi and bacteria. The polypeptide is Nitrate reductase [NAD(P)H] (NIA1) (Betula pendula (European white birch)).